Here is a 418-residue protein sequence, read N- to C-terminus: Aminodeoxyfutalosine deaminase (418 aa).

Zn(2+)-binding residues include His97 and His99. Substrate-binding residues include Glu173 and His211. His238 lines the Zn(2+) pocket. Residue Glu241 is the Proton donor of the active site. Zn(2+) is bound at residue Asp352.

It belongs to the metallo-dependent hydrolases superfamily. Zn(2+) serves as cofactor.

It catalyses the reaction 6-amino-6-deoxyfutalosine + H2O + H(+) = futalosine + NH4(+). The protein operates within quinol/quinone metabolism; menaquinone biosynthesis. In terms of biological role, catalyzes the deamination of aminodeoxyfutalosine (AFL) into futalosine (FL). To a lesser extent, can also deaminate 5'-deoxyadenosine, 5'-methylthioadenosine, 2'-deoxyadenosine, adenosine, 1-(6-amino-9H-purin-9-yl)-1-deoxy-N-ethyl-beta-D-ribofuranuronamide (NECA), and S-adenosylhomocysteine. The protein is Aminodeoxyfutalosine deaminase of Deinococcus radiodurans (strain ATCC 13939 / DSM 20539 / JCM 16871 / CCUG 27074 / LMG 4051 / NBRC 15346 / NCIMB 9279 / VKM B-1422 / R1).